The primary structure comprises 137 residues: Small ribosomal subunit protein uS12 (137 aa).

Residue D89 is modified to 3-methylthioaspartic acid. The interval 101 to 137 is disordered; that stretch reads SLDTSGVADRKQSRSKYGAKQPKAGAPAAPVKGKGKK. Over residues 116 to 137 the composition is skewed to low complexity; sequence KYGAKQPKAGAPAAPVKGKGKK.

This sequence belongs to the universal ribosomal protein uS12 family. In terms of assembly, part of the 30S ribosomal subunit. Contacts proteins S8 and S17. May interact with IF1 in the 30S initiation complex.

In terms of biological role, with S4 and S5 plays an important role in translational accuracy. Its function is as follows. Interacts with and stabilizes bases of the 16S rRNA that are involved in tRNA selection in the A site and with the mRNA backbone. Located at the interface of the 30S and 50S subunits, it traverses the body of the 30S subunit contacting proteins on the other side and probably holding the rRNA structure together. The combined cluster of proteins S8, S12 and S17 appears to hold together the shoulder and platform of the 30S subunit. This is Small ribosomal subunit protein uS12 from Chlorobium chlorochromatii (strain CaD3).